Here is a 310-residue protein sequence, read N- to C-terminus: Glucan endo-1,3-beta-glucosidase GI (310 aa).

The active-site Proton donor is the glutamate 96. Residue glutamate 234 is the Nucleophile of the active site.

This sequence belongs to the glycosyl hydrolase 17 family. In terms of assembly, monomer. As to expression, young leaves and roots.

The catalysed reaction is Hydrolysis of (1-&gt;3)-beta-D-glucosidic linkages in (1-&gt;3)-beta-D-glucans.. Functionally, may provide a degree of protection against microbial invasion of germinated barley grain through its ability to degrade fungal cell wall polysaccharides. Does not hydrolyze (1,3;1,4)-beta-D-glucans, (1,6)-beta-D-glucan, CM-cellulose, insoluble (1,3)-beta-D-glucans or aryl beta-D-glycosides. This chain is Glucan endo-1,3-beta-glucosidase GI, found in Hordeum vulgare (Barley).